The primary structure comprises 107 residues: UPF0473 protein Ldb1604 (107 aa).

It belongs to the UPF0473 family.

The protein is UPF0473 protein Ldb1604 of Lactobacillus delbrueckii subsp. bulgaricus (strain ATCC 11842 / DSM 20081 / BCRC 10696 / JCM 1002 / NBRC 13953 / NCIMB 11778 / NCTC 12712 / WDCM 00102 / Lb 14).